The following is a 104-amino-acid chain: uncharacterized protein (104 aa).

This sequence to A.aeolicus AQ_377.

This is an uncharacterized protein from Archaeoglobus fulgidus (strain ATCC 49558 / DSM 4304 / JCM 9628 / NBRC 100126 / VC-16).